The following is a 369-amino-acid chain: Tryptophan 2,3-dioxygenase 2 (369 aa).

Substrate contacts are provided by residues 36 to 40 (FIVVH) and Arg-107. His-303 is a binding site for heme. Residue Thr-317 coordinates substrate.

This sequence belongs to the tryptophan 2,3-dioxygenase family. As to quaternary structure, homotetramer. The cofactor is heme.

It catalyses the reaction L-tryptophan + O2 = N-formyl-L-kynurenine. Its pathway is amino-acid degradation; L-tryptophan degradation via kynurenine pathway; L-kynurenine from L-tryptophan: step 1/2. Heme-dependent dioxygenase that catalyzes the oxidative cleavage of the L-tryptophan (L-Trp) pyrrole ring and converts L-tryptophan to N-formyl-L-kynurenine. Catalyzes the oxidative cleavage of the indole moiety. The protein is Tryptophan 2,3-dioxygenase 2 of Ralstonia nicotianae (strain ATCC BAA-1114 / GMI1000) (Ralstonia solanacearum).